The primary structure comprises 351 residues: Riboflavin-binding protein RibY (351 aa).

The signal sequence occupies residues 1–19 (MMKLRVLTLGILIILLITA). C20 carries the N-palmitoyl cysteine lipid modification. Residue C20 is the site of S-diacylglycerol cysteine attachment.

It belongs to the NMT1 family. The complex is likely composed of an ATP-binding protein, a transmembrane protein (RibX) and a solute-binding protein (RibY).

The protein localises to the cell membrane. In terms of biological role, part of an ABC transporter complex that transports riboflavin into the cell. Binds riboflavin. In Chloroflexus aurantiacus (strain ATCC 29366 / DSM 635 / J-10-fl), this protein is Riboflavin-binding protein RibY.